Here is a 188-residue protein sequence, read N- to C-terminus: FMN-dependent NADPH-azoreductase (188 aa).

The protein belongs to the azoreductase type 2 family. In terms of assembly, homotetramer. Requires FMN as cofactor.

Its function is as follows. Catalyzes the reductive cleavage of azo bond in aromatic azo compounds to the corresponding amines. Requires NADPH, but not NADH, as an electron donor for its activity. The polypeptide is FMN-dependent NADPH-azoreductase (azo1) (Staphylococcus saprophyticus subsp. saprophyticus (strain ATCC 15305 / DSM 20229 / NCIMB 8711 / NCTC 7292 / S-41)).